The primary structure comprises 783 residues: Heat shock transcription factor (783 aa).

A disordered region spans residues 1-59 (MTTNLYAIAGPSKPTTPTSTPSPRSEPPSPLKSLTSLPTNPLNSHGTSTPNTLTNQLSS). Low complexity-rich tracts occupy residues 11–23 (PSKP…TPSP) and 31–42 (LKSLTSLPTNPL). Residues 43–59 (NSHGTSTPNTLTNQLSS) are compositionally biased toward polar residues. Residues 78-168 (MKVPAFLNKL…PIELWEFANP (91 aa)) mediate DNA binding. The tract at residues 181-262 (VTRKNNRPSN…PGSVPPSHTS (82 aa)) is disordered. 2 stretches are compositionally biased toward low complexity: residues 189-199 (SNSGVGPSSSV) and 209-233 (STRS…ISQG). Residues 238-262 (NHSTSGKYLITDGTTPGSVPPSHTS) are compositionally biased toward polar residues. Residues 280–333 (GIAAIRQTQASIATDLRKLQASNEALWRQAYETQEKQRKHEETIDLIVSFLERL) form an involved in trimerization region. 2 stretches are compositionally biased toward basic and acidic residues: residues 350–372 (RGVG…SRFA) and 399–415 (TGEH…DRLV). Disordered stretches follow at residues 350–554 (RGVG…LLSP), 599–652 (QALA…TLAL), and 736–783 (QGLA…KSES). The segment covering 418-448 (GSNSEYSIPSVKRTSSSSHPISLGQLGSSRF) has biased composition (polar residues). Composition is skewed to low complexity over residues 452 to 467 (PSED…GSTS), 497 to 511 (LSPL…PSSS), 522 to 550 (PFPS…PSQP), and 616 to 632 (NPNG…AHGM). Over residues 742 to 752 (GEEEGEREVEG) the composition is skewed to acidic residues. Over residues 753–765 (DGGVSSSGAGAGA) the composition is skewed to gly residues.

This sequence belongs to the HSF family. Homotrimer. Homotrimerization increases the affinity of HSF1 to DNA. Interacts with transcriptional coregulator SSA1 on chromatin.

It is found in the nucleus. In terms of biological role, DNA-binding transcription factor that specifically binds heat shock promoter elements (HSE) and activates transcription. Together with its coregulator SSA1, activates expression of laccase LAC1 during glucose starvation. The protein is Heat shock transcription factor of Cryptococcus neoformans var. neoformans serotype D (strain JEC21 / ATCC MYA-565) (Filobasidiella neoformans).